Here is an 83-residue protein sequence, read N- to C-terminus: Male-specific opa-containing protein (83 aa).

An N-terminal signal peptide occupies residues 1-18 (MNFIQIAVLFVLVAVALA). The disordered stretch occupies residues 23 to 83 (DPANLPAPEA…NVNHNVITIG (61 aa)). The segment covering 28-49 (PAPEAAAAPPAAAAAPPAAAAA) has biased composition (low complexity). A compositionally biased stretch (pro residues) spans 50-59 (PPAPPAPPAA).

Adult male abdomen.

Its function is as follows. May be a male specific regulatory factor. The protein is Male-specific opa-containing protein (msopa) of Drosophila melanogaster (Fruit fly).